A 266-amino-acid polypeptide reads, in one-letter code: MPDYLDDLRLAHVLADAADAATMDRFKALDLKVETKPDMTPVSEADKAAEELIRGHLSRARPRDSVHGEEFGVAGTGPRRWVIDPIDGTKNYVRGVPVWATLIALMEAKEGGYQPVVGLVSAPALGRRWWAVEDHGAFTGRSLTSAHRLHVSQVSTLSDASFAYSSLSGWEEQGRLDGFLDLTREVWRTRAYGDFWPYMMVAEGSVDLCAEPELSLWDMAANAIIVTEAGGTFTGLDGRPGPHSGNAAASNGRLHDELLGYLNQRY.

Glu69, Asp84, Ile86, and Asp87 together coordinate Mg(2+). Glu69 lines the substrate pocket. Substrate-binding positions include 86-89 (IDGT), Arg190, and Asp218. Asp218 provides a ligand contact to Mg(2+).

This sequence belongs to the inositol monophosphatase superfamily. The cofactor is Mg(2+).

The catalysed reaction is L-histidinol phosphate + H2O = L-histidinol + phosphate. Its pathway is amino-acid biosynthesis; L-histidine biosynthesis; L-histidine from 5-phospho-alpha-D-ribose 1-diphosphate: step 8/9. In terms of biological role, catalyzes the dephosphorylation of histidinol-phosphate to histidinol, the direct precursor of histidine. This is Histidinol-phosphatase from Streptomyces coelicolor (strain ATCC BAA-471 / A3(2) / M145).